Here is a 73-residue protein sequence, read N- to C-terminus: Putative antimicrobial peptide clone 4 (73 aa).

A signal peptide spans 1–22 (MQMKYLIPIFFLVLIVADHCHA). Positions 45 to 73 (DITSQIEQYRNLQKREAELEDILANLPVY) are excised as a propeptide.

Belongs to the non-disulfide-bridged peptide (NDBP) superfamily. Short antimicrobial peptide (group 4) family. As to expression, expressed by the venom gland.

It localises to the secreted. In terms of biological role, antimicrobial peptide. Has a high antibacterial activity against the Gram-positive bacterium S.aureus (MIC=5-17.30 uM), the methicillin-resistant S.aureus (MRSA) (MIC=17.30 uM), and E.faecalis (MIC=69.23 uM). Has antifungal activity against Candida spp. and one Cryptococcus neoformans strains with MICs values ranging from 6.25 to 100 uM. Also shows an inhibitory activity on C.albicans biofilms at high concentrations. Has a moderate hemolytic potency (18% at 20 uM). Also inhibits the growth of the five cancer cell lines tested. In the model of polymicrobial sepsis, it exhibits an antibiotic effect, reducing the levels of microorganisms in the infectious focus and the inflammatory responses in the lung and cecum of septic animals. This chain is Putative antimicrobial peptide clone 4, found in Tityus costatus (Brazilian scorpion).